We begin with the raw amino-acid sequence, 311 residues long: Formimidoylglutamase (311 aa).

Mn(2+) contacts are provided by histidine 122, aspartate 151, histidine 153, aspartate 155, cysteine 242, and aspartate 244.

Belongs to the arginase family. As to quaternary structure, homodimer. Requires Mn(2+) as cofactor.

The catalysed reaction is N-formimidoyl-L-glutamate + H2O = formamide + L-glutamate. The protein operates within amino-acid degradation; L-histidine degradation into L-glutamate; L-glutamate from N-formimidoyl-L-glutamate (hydrolase route): step 1/1. In terms of biological role, catalyzes the conversion of N-formimidoyl-L-glutamate to L-glutamate and formamide. The sequence is that of Formimidoylglutamase from Pseudomonas aeruginosa (strain ATCC 15692 / DSM 22644 / CIP 104116 / JCM 14847 / LMG 12228 / 1C / PRS 101 / PAO1).